The primary structure comprises 301 residues: Homoserine O-acetyltransferase (301 aa).

Cys142 acts as the Acyl-thioester intermediate in catalysis. Substrate contacts are provided by Lys163 and Ser192. His235 functions as the Proton acceptor in the catalytic mechanism. The active site involves Glu237. Arg249 provides a ligand contact to substrate.

Belongs to the MetA family.

Its subcellular location is the cytoplasm. The catalysed reaction is L-homoserine + acetyl-CoA = O-acetyl-L-homoserine + CoA. It functions in the pathway amino-acid biosynthesis; L-methionine biosynthesis via de novo pathway; O-acetyl-L-homoserine from L-homoserine: step 1/1. Its function is as follows. Transfers an acetyl group from acetyl-CoA to L-homoserine, forming acetyl-L-homoserine. The polypeptide is Homoserine O-acetyltransferase (Lachnoclostridium phytofermentans (strain ATCC 700394 / DSM 18823 / ISDg) (Clostridium phytofermentans)).